A 244-amino-acid chain; its full sequence is MEAAQAFENLANLEQEFGKAEIEILKKQNELFQPLFEQRRDILKTINNFWVVVLEAAGDEISQYITPEDSVLLEKLENIYVERFNEKEPRDVRISLTFQPNEYLQDDNLTLVKEVRIKEEKAKDDEGLEKKITKYTSQPVDIHWKPGKSLFRKNKKLPPNFFDYFQWTGEEEDDDFDGATLTIFLAEDLFPNAVKYFTEAMTEEASDEDESVDLEEDEEEEDEEDEEGDEEKQEPPSKKSKKSN.

Positions 199-244 (EAMTEEASDEDESVDLEEDEEEEDEEDEEGDEEKQEPPSKKSKKSN) are disordered. The span at 201-232 (MTEEASDEDESVDLEEDEEEEDEEDEEGDEEK) shows a compositional bias: acidic residues. Position 211 is a phosphoserine (S211).

This sequence belongs to the nucleosome assembly protein (NAP) family.

The protein localises to the nucleus. In Schizosaccharomyces pombe (strain 972 / ATCC 24843) (Fission yeast), this protein is Putative nucleosome assembly protein C36B7.08c.